Here is a 242-residue protein sequence, read N- to C-terminus: MTDVVPTTALSEIQLRLLCHDDIDRIKVLCGEWFPIEYPDSWYHDITSNKKFFSLAATFRGGIVGMIVAEIKSRTKVHKEDGDILASSFPVDTQVAYILSLGVVKEFRKHGIGSLLLDSLKEHISTTAQDHCKAIYLHVLTTNNTAIHFYENRDFKQHHYLPYYYSIRGVLKDGFTYVLYINGGHPPWTIFDYIHHIGSALASLSPCSIPQRIYRQAQNLLRSFLPWSGISSKSGIEYSRTM.

The Cytoplasmic segment spans residues 1-192 (MTDVVPTTAL…GGHPPWTIFD (192 aa)). An N-acetyltransferase domain is found at 13 to 182 (IQLRLLCHDD…DGFTYVLYIN (170 aa)). Tyr38 lines the substrate pocket. The active site involves Tyr97. Residue Leu99 participates in substrate binding. Acetyl-CoA contacts are provided by residues 101–103 (LGV) and 109–114 (KHGIGS). Residue His138 is part of the active site. Residues Asn143 and 150 to 153 (YENR) each bind acetyl-CoA. A required for homodimerization region spans residues 162 to 173 (PYYYSIRGVLKD). Tyr165 provides a ligand contact to substrate. The helical intramembrane region spans 193 to 236 (YIHHIGSALASLSPCSIPQRIYRQAQNLLRSFLPWSGISSKSGI). The Cytoplasmic segment spans residues 237–242 (EYSRTM).

This sequence belongs to the acetyltransferase family. NAA60 subfamily. Monomer and homodimer; monomer in presence of substrate and homodimer in its absence.

It localises to the golgi apparatus membrane. The catalysed reaction is N-terminal L-methionyl-[transmembrane protein] + acetyl-CoA = N-terminal N(alpha)-acetyl-L-methionyl-[transmembrane protein] + CoA + H(+). It catalyses the reaction L-lysyl-[protein] + acetyl-CoA = N(6)-acetyl-L-lysyl-[protein] + CoA + H(+). N-alpha-acetyltransferase that specifically mediates the acetylation of N-terminal residues of the transmembrane proteins, with a strong preference for N-termini facing the cytosol. Displays N-terminal acetyltransferase activity towards a range of N-terminal sequences including those starting with Met-Lys, Met-Val, Met-Ala and Met-Met. Required for normal chromosomal segregation during anaphase. May also show histone acetyltransferase activity; such results are however unclear in vivo and would require additional experimental evidences. The polypeptide is N-alpha-acetyltransferase 60 (naa60) (Danio rerio (Zebrafish)).